We begin with the raw amino-acid sequence, 92 residues long: MNRPAILKKKAAKDVASVLKIIFLFYLFLIARLKQRYSIREIKRDLWNIRENYSSNAAIAKIYCRKRKASGPGKHLTILPYGWVRFITFPIM.

This is an uncharacterized protein from Escherichia coli (strain K12).